The sequence spans 243 residues: Terpene cyclase janB (243 aa).

The next 7 membrane-spanning stretches (helical) occupy residues 19–39 (LADLFVLGMGLGWVINYVGMV), 48–68 (YGMAIMPLCCNIAWEIVYCVF), 77–97 (LGVFAMGLLINFGVMYAAIIF), 112–132 (LPWIFCIGVLGFLTGHLALAA), 134–154 (IGPSLAYSWGAVVCQLLLSVG), 172–194 (LWLSRFLGSCCTVGFASLRWMYW), and 205–225 (LVLWSLAVFLMVDGSYGVCFW).

This sequence belongs to the paxB family.

Its subcellular location is the membrane. Its pathway is secondary metabolite biosynthesis. In terms of biological role, terpene cyclase; part of the gene cluster that mediates the biosynthesis of the indole diterpenes janthitremanes such as shearinine K or shearinine A. The geranylgeranyl diphosphate (GGPP) synthase janG catalyzes the first step in janthitremane biosynthesis via conversion of farnesyl pyrophosphate and isopentyl pyrophosphate into geranylgeranyl pyrophosphate (GGPP). Condensation of indole-3-glycerol phosphate with GGPP by the prenyl transferase janC then forms 3-geranylgeranylindole (3-GGI). Epoxidation by the FAD-dependent monooxygenase janM leads to a epoxidized-GGI that is substrate of the terpene cyclase janB for cyclization to yield paspaline. Paspaline is subsequently converted to 13-desoxypaspaline by the cytochrome P450 monooxygenase janP, via beta-PC-M6 in a series of alpha-face oxidations. The cytochrome P450 monooxygenase janQ is proposed to carry out sequential beta-face oxidation steps at C-7 and C-13 of 13-desoxypaspaline to form paspalicine and paspalinine respectively. The indole diterpene prenyltransferase janD may then convert paspalinine into shearinine K which is substrate of janO and/or additional enzymes for oxidation and cyclization to generate shearinine A. This Penicillium janthinellum (Penicillium vitale) protein is Terpene cyclase janB.